The sequence spans 803 residues: H(+)/Cl(-) exchange transporter 7 (803 aa).

Residues 1 to 46 are disordered; that stretch reads MANVSKKVSWSGRDRDDEEGAPLLRRTGQPDEETPLLNGAGPGARQ. Residues 1 to 124 lie on the Cytoplasmic side of the membrane; that stretch reads MANVSKKVSW…TAFRTVEIKR (124 aa). Ser9 bears the Phosphoserine mark. A run of 2 helical transmembrane segments spans residues 125–157 and 172–195; these read WVIC…YRVI and FSLL…VAFI. Positions 201-205 match the Selectivity filter part_1 motif; the sequence is GSGIP. A chloride-binding site is contributed by Ser202. Residues 204 to 211 constitute an intramembrane region (helical); it reads IPQIKCFL. 2 helical membrane passes run 221–239 and 245–262; these read RLKT…VVGG and EGPM…ISQG. The Selectivity filter part_2 signature appears at 243–247; the sequence is GKEGP. 2 intramembrane regions (helical) span residues 286–298 and 302–310; these read FVSA…VSAA and PVGGVLFSL. 5 helical membrane passes run 320-339, 373-403, 408-430, 485-505, and 510-533; these read FLTW…LNFV, IPVF…FRIR, PCLQ…FVLI, PMTL…TYGL, and GVFI…LSYL. The Selectivity filter part_3 motif lies at 510–514; the sequence is GVFIP. Phe512 lines the chloride pocket. The helical intramembrane region spans 543 to 557; the sequence is GKYALMGAAAQLGGI. The note=Loop between two helices intramembrane region spans 558–560; the sequence is VRM. Positions 561–572 form an intramembrane region, helical; that stretch reads TLSLTVIMMEAT. An intramembrane region (note=Loop between two helices) is located at residues 573–576; that stretch reads SNVT. The chain crosses the membrane as a helical span at residues 577-595; it reads YGFPIMLVLMTAKIVGDVF. The Cytoplasmic segment spans residues 596 to 803; sequence IEGLYDMHIQ…GLEELSLAQT (208 aa). Tyr600 serves as a coordination point for chloride. 2 consecutive CBS domains span residues 629-693 and 739-797; these read MSTP…VFVE and MNPS…GLEE. ATP is bound by residues 656-658 and 781-784; these read HNG and TRKD. Ser799 carries the post-translational modification Phosphoserine.

The protein belongs to the chloride channel (TC 2.A.49) family. ClC-7/CLCN7 subfamily. As to quaternary structure, chloride channel 7 are heteromers of alpha (CLCN7) and beta (OSTM1) subunits. As to expression, liver, spleen, kidneys and brain.

Its subcellular location is the lysosome membrane. The enzyme catalyses 2 chloride(in) + H(+)(out) = 2 chloride(out) + H(+)(in). In terms of biological role, slowly voltage-gated channel mediating the exchange of chloride ions against protons. Functions as antiporter and contributes to the acidification of the lysosome lumen and may be involved in maintaining lysosomal pH. The CLC channel family contains both chloride channels and proton-coupled anion transporters that exchange chloride or another anion for protons. The presence of conserved gating glutamate residues is typical for family members that function as antiporters. The protein is H(+)/Cl(-) exchange transporter 7 of Mus musculus (Mouse).